A 366-amino-acid polypeptide reads, in one-letter code: 3-dehydroquinate synthase (366 aa).

NAD(+) is bound by residues D71 to K76, G105 to D109, T129 to T130, K142, K151, and C169 to T172. E184, H247, and H264 together coordinate Zn(2+).

The protein belongs to the sugar phosphate cyclases superfamily. Dehydroquinate synthase family. It depends on Co(2+) as a cofactor. Requires Zn(2+) as cofactor. The cofactor is NAD(+).

The protein localises to the cytoplasm. The catalysed reaction is 7-phospho-2-dehydro-3-deoxy-D-arabino-heptonate = 3-dehydroquinate + phosphate. The protein operates within metabolic intermediate biosynthesis; chorismate biosynthesis; chorismate from D-erythrose 4-phosphate and phosphoenolpyruvate: step 2/7. Its function is as follows. Catalyzes the conversion of 3-deoxy-D-arabino-heptulosonate 7-phosphate (DAHP) to dehydroquinate (DHQ). The chain is 3-dehydroquinate synthase from Serratia proteamaculans (strain 568).